Here is a 330-residue protein sequence, read N- to C-terminus: G-protein coupled receptor 157 (330 aa).

Residues 1 to 15 lie on the Extracellular side of the membrane; it reads MPTPAPPTELLPWER. Residues 16 to 36 traverse the membrane as a helical segment; it reads AVVLLSCVLSALGSGLLVATH. The Cytoplasmic segment spans residues 37-48; sequence ALWPDLRSRARR. The helical transmembrane segment at 49-69 threads the bilayer; it reads LLLFLSLADLLSAASYFYGVL. The Extracellular segment spans residues 70 to 87; that stretch reads QDFAGTSWDCVLQGALST. A helical transmembrane segment spans residues 88–108; that stretch reads FANTSSFFWTVAIALYLYLNI. The Cytoplasmic portion of the chain corresponds to 109–119; it reads VRATRGPCTDH. The helical transmembrane segment at 120-140 threads the bilayer; sequence LVWAFHLISWGVPLAITVAAV. Over 141 to 166 the chain is Extracellular; it reads CLKKIGYDASDVSVGWCWINLEAEDR. Residues 167–187 traverse the membrane as a helical segment; the sequence is VLWMLLTGKLWEMLAYILLPL. The Cytoplasmic segment spans residues 188 to 227; sequence LYLLVRKHINRAHQALSEYRPIWEGRQLQRGSPTSMADKK. A helical membrane pass occupies residues 228 to 250; it reads LILIPFIFICLRVWSTVRFVLTL. Residues 251–259 are Extracellular-facing; sequence CGSPVVQAP. The helical transmembrane segment at 260–282 threads the bilayer; it reads VLVVLHGIGNTFQGGANCIMFVL. Residues 283-330 lie on the Cytoplasmic side of the membrane; it reads CTRAVRTRLFSLCCCYPRPPTQNPPGASIPPKMGESQESRRTPEVPST. Positions 303–330 are disordered; the sequence is TQNPPGASIPPKMGESQESRRTPEVPST. A compositionally biased stretch (basic and acidic residues) spans 317-330; it reads ESQESRRTPEVPST.

Belongs to the G-protein coupled receptor 2 family.

Its subcellular location is the cell projection. The protein resides in the cilium membrane. Orphan receptor that promotes neuronal differentiation of radial glial progenitors (RGPs). The activity of this receptor is mediated by a G(q)-protein that activates a phosphatidylinositol-calcium second messenger. The protein is G-protein coupled receptor 157 (Gpr157) of Rattus norvegicus (Rat).